The sequence spans 337 residues: Tetraacyldisaccharide 4'-kinase (337 aa).

52 to 59 contacts ATP; the sequence is TLGGAGKT.

This sequence belongs to the LpxK family.

It catalyses the reaction a lipid A disaccharide + ATP = a lipid IVA + ADP + H(+). It participates in glycolipid biosynthesis; lipid IV(A) biosynthesis; lipid IV(A) from (3R)-3-hydroxytetradecanoyl-[acyl-carrier-protein] and UDP-N-acetyl-alpha-D-glucosamine: step 6/6. Its function is as follows. Transfers the gamma-phosphate of ATP to the 4'-position of a tetraacyldisaccharide 1-phosphate intermediate (termed DS-1-P) to form tetraacyldisaccharide 1,4'-bis-phosphate (lipid IVA). In Methylobacterium nodulans (strain LMG 21967 / CNCM I-2342 / ORS 2060), this protein is Tetraacyldisaccharide 4'-kinase.